Here is a 386-residue protein sequence, read N- to C-terminus: Lysophosphatidylserine lipase ABHD12 (386 aa).

Residues 1-66 (MRKRAEPVPP…YGLWSRLRMF (66 aa)) are Cytoplasmic-facing. A helical transmembrane segment spans residues 67–87 (LIFLLGLYIAIPFLVKICPAI). The Extracellular segment spans residues 88–386 (QTQLVFLNLV…RDFLGNTEQQ (299 aa)). N-linked (GlcNAc...) asparagine glycosylation occurs at N114. S237 acts as the Nucleophile in catalysis. Residues D324 and H363 each act as charge relay system in the active site.

The protein belongs to the serine esterase family.

Its subcellular location is the endoplasmic reticulum membrane. It carries out the reaction 1-(9Z-octadecenoyl)-sn-glycero-3-phospho-L-serine + H2O = sn-glycero-3-phospho-L-serine + (9Z)-octadecenoate + H(+). The catalysed reaction is 1-(9Z-octadecenoyl)-sn-glycero-3-phospho-(1'-sn-glycerol) + H2O = sn-glycero-3-phospho-(1'-sn-glycerol) + (9Z)-octadecenoate + H(+). The enzyme catalyses 1-(9Z-octadecenoyl)-sn-glycero-3-phospho-(1D-myo-inositol) + H2O = sn-glycero-3-phospho-1D-myo-inositol + (9Z)-octadecenoate + H(+). It catalyses the reaction 1-(9Z-octadecenoyl)-sn-glycero-3-phosphoethanolamine + H2O = sn-glycero-3-phosphoethanolamine + (9Z)-octadecenoate + H(+). It carries out the reaction 1-(9Z-octadecenoyl)-sn-glycero-3-phosphocholine + H2O = 1-(9Z-octadecenoyl)-sn-glycerol + phosphocholine + H(+). The catalysed reaction is 2-(9Z-octadecenoyl)-glycerol + H2O = glycerol + (9Z)-octadecenoate + H(+). The enzyme catalyses 1-hexadecanoyl-sn-glycero-3-phospho-L-serine + H2O = sn-glycero-3-phospho-L-serine + hexadecanoate + H(+). It catalyses the reaction 2-(5Z,8Z,11Z,14Z-eicosatetraenoyl)-glycerol + H2O = glycerol + (5Z,8Z,11Z,14Z)-eicosatetraenoate + H(+). It carries out the reaction Hydrolyzes glycerol monoesters of long-chain fatty acids.. The catalysed reaction is 1-decanoylglycerol + H2O = decanoate + glycerol + H(+). The enzyme catalyses 1-dodecanoylglycerol + H2O = dodecanoate + glycerol + H(+). It catalyses the reaction 1-tetradecanoylglycerol + H2O = tetradecanoate + glycerol + H(+). It carries out the reaction 2-hexadecanoylglycerol + H2O = glycerol + hexadecanoate + H(+). The catalysed reaction is 1-(9Z-octadecenoyl)-glycerol + H2O = glycerol + (9Z)-octadecenoate + H(+). The enzyme catalyses 2-(9Z,12Z-octadecadienoyl)-glycerol + H2O = (9Z,12Z)-octadecadienoate + glycerol + H(+). It catalyses the reaction 1-(5Z,8Z,11Z,14Z-eicosatetraenoyl)-glycerol + H2O = glycerol + (5Z,8Z,11Z,14Z)-eicosatetraenoate + H(+). It carries out the reaction 1-(9Z,12Z-octadecadienoyl)-glycerol + H2O = (9Z,12Z)-octadecadienoate + glycerol + H(+). The catalysed reaction is 1-hexadecanoylglycerol + H2O = glycerol + hexadecanoate + H(+). The enzyme catalyses 1-octadecanoylglycerol + H2O = octadecanoate + glycerol + H(+). It catalyses the reaction 1-octadecanoyl-2-(9,10-epoxyoctadecanoyl)-sn-glycero-3-phospho-L-serine + H2O = 9,10-epoxyoctadecanoate + 1-octadecanoyl-sn-glycero-3-phosphoserine + H(+). It carries out the reaction 1-octadecanoyl-2-(10-hydroxyoctadecanoyl)-sn-glycero-3-phospho-L-serine + H2O = 1-octadecanoyl-sn-glycero-3-phosphoserine + 10-hydroxyoctadecanoate + H(+). The catalysed reaction is 1-hexadecanoyl-2-(10-hydroxyoctadecanoyl)-sn-glycero-3-phospho-L-serine + H2O = 10-hydroxyoctadecanoate + 1-hexadecanoyl-sn-glycero-3-phospho-L-serine + H(+). Lysophosphatidylserine (LPS) lipase that mediates the hydrolysis of lysophosphatidylserine, a class of signaling lipids that regulates immunological and neurological processes. Represents a major lysophosphatidylserine lipase in the brain, thereby playing a key role in the central nervous system. Also able to hydrolyze oxidized phosphatidylserine; oxidized phosphatidylserine is produced in response to severe inflammatory stress and constitutes a proapoptotic 'eat me' signal. Also has monoacylglycerol (MAG) lipase activity: hydrolyzes 2-arachidonoylglycerol (2-AG), thereby acting as a regulator of endocannabinoid signaling pathways. Has a strong preference for very-long-chain lipid substrates; substrate specificity is likely due to improved catalysis and not improved substrate binding. In Xenopus tropicalis (Western clawed frog), this protein is Lysophosphatidylserine lipase ABHD12.